Consider the following 277-residue polypeptide: Proteasome subunit beta type-7 (277 aa).

The propeptide at 1–43 (MAAVSVYERPVGGFSFDNCRRNAVLEADFAKKGYKLPTARKTG) is removed in mature form. The active-site Nucleophile is T44.

It belongs to the peptidase T1B family. As to quaternary structure, the 26S proteasome consists of a 20S proteasome core and two 19S regulatory subunits. The 20S proteasome core is a barrel-shaped complex made of 28 subunits that are arranged in four stacked rings. The two outer rings are each formed by seven alpha subunits, and the two inner rings are formed by seven beta subunits. The proteolytic activity is exerted by three beta-subunits PSMB5, PSMB6 and PSMB7.

The protein resides in the cytoplasm. The protein localises to the nucleus. The catalysed reaction is Cleavage of peptide bonds with very broad specificity.. Component of the 20S core proteasome complex involved in the proteolytic degradation of most intracellular proteins. This complex plays numerous essential roles within the cell by associating with different regulatory particles. Associated with two 19S regulatory particles, forms the 26S proteasome and thus participates in the ATP-dependent degradation of ubiquitinated proteins. The 26S proteasome plays a key role in the maintenance of protein homeostasis by removing misfolded or damaged proteins that could impair cellular functions, and by removing proteins whose functions are no longer required. Associated with the PA200 or PA28, the 20S proteasome mediates ubiquitin-independent protein degradation. This type of proteolysis is required in several pathways including spermatogenesis (20S-PA200 complex) or generation of a subset of MHC class I-presented antigenic peptides (20S-PA28 complex). Within the 20S core complex, PSMB7 displays a trypsin-like activity. The protein is Proteasome subunit beta type-7 (PSMB7) of Bos taurus (Bovine).